Reading from the N-terminus, the 309-residue chain is Ribonuclease Z (309 aa).

Zn(2+) contacts are provided by His-63, His-65, Asp-67, His-68, His-141, Asp-212, and His-270. Asp-67 acts as the Proton acceptor in catalysis.

This sequence belongs to the RNase Z family. In terms of assembly, homodimer. Zn(2+) is required as a cofactor.

The enzyme catalyses Endonucleolytic cleavage of RNA, removing extra 3' nucleotides from tRNA precursor, generating 3' termini of tRNAs. A 3'-hydroxy group is left at the tRNA terminus and a 5'-phosphoryl group is left at the trailer molecule.. Zinc phosphodiesterase, which displays some tRNA 3'-processing endonuclease activity. Probably involved in tRNA maturation, by removing a 3'-trailer from precursor tRNA. The sequence is that of Ribonuclease Z from Limosilactobacillus reuteri (strain DSM 20016) (Lactobacillus reuteri).